A 65-amino-acid chain; its full sequence is Conotoxin Cal1.3 (65 aa).

Residues 1-18 (MRCLPVFIILLLLASTAA) form the signal peptide. Positions 19 to 49 (VDVAGSKLKRRLERKPYQGSQAYVKKTAFGL) are excised as a propeptide. Intrachain disulfides connect cysteine 52/cysteine 62 and cysteine 53/cysteine 59. Proline 61 carries the 4-hydroxyproline modification. Cysteine 62 carries the post-translational modification Cysteine amide.

Belongs to the conotoxin T superfamily. Expressed by the venom duct.

The protein resides in the secreted. Probable neurotoxin with unknown target. Possibly targets ion channels. In Californiconus californicus (California cone), this protein is Conotoxin Cal1.3.